Consider the following 129-residue polypeptide: Regulator of ribonuclease activity B (129 aa).

The protein belongs to the RraB family. As to quaternary structure, interacts with the C-terminal region of Rne.

The protein localises to the cytoplasm. Its function is as follows. Globally modulates RNA abundance by binding to RNase E (Rne) and regulating its endonucleolytic activity. Can modulate Rne action in a substrate-dependent manner by altering the composition of the degradosome. This Shewanella denitrificans (strain OS217 / ATCC BAA-1090 / DSM 15013) protein is Regulator of ribonuclease activity B.